A 256-amino-acid chain; its full sequence is Imidazole glycerol phosphate synthase subunit HisF (256 aa).

Residues aspartate 12 and aspartate 131 contribute to the active site.

It belongs to the HisA/HisF family. In terms of assembly, heterodimer of HisH and HisF.

The protein resides in the cytoplasm. It carries out the reaction 5-[(5-phospho-1-deoxy-D-ribulos-1-ylimino)methylamino]-1-(5-phospho-beta-D-ribosyl)imidazole-4-carboxamide + L-glutamine = D-erythro-1-(imidazol-4-yl)glycerol 3-phosphate + 5-amino-1-(5-phospho-beta-D-ribosyl)imidazole-4-carboxamide + L-glutamate + H(+). It participates in amino-acid biosynthesis; L-histidine biosynthesis; L-histidine from 5-phospho-alpha-D-ribose 1-diphosphate: step 5/9. In terms of biological role, IGPS catalyzes the conversion of PRFAR and glutamine to IGP, AICAR and glutamate. The HisF subunit catalyzes the cyclization activity that produces IGP and AICAR from PRFAR using the ammonia provided by the HisH subunit. This Pseudomonas syringae pv. syringae (strain B728a) protein is Imidazole glycerol phosphate synthase subunit HisF.